The sequence spans 981 residues: Echinoderm microtubule-associated protein-like 4 (981 aa).

Residue methionine 1 is modified to N-acetylmethionine. Disordered regions lie at residues 1 to 20 (MDGF…TSDV) and 57 to 205 (DHVA…PKLI). The segment at 1 to 249 (MDGFAGSLDD…IPSDVDNYDD (249 aa)) is microtubule-binding. Serine 7, serine 13, serine 16, and serine 61 each carry phosphoserine. Residues 14–63 (AASTSDVQDRLSALESRVQQQEDEITVLKAALADVLRRLAISEDHVASVK) are a coiled coil. Threonine 96 carries the post-translational modification Phosphothreonine. Residues 114–134 (GTEKKKEKPQGQREKKEESHS) show a composition bias toward basic and acidic residues. Phosphoserine; by NEK7 is present on serine 134. The span at 137–155 (QSPQIRASPSPQPSSQPLQ) shows a compositional bias: low complexity. Position 144 is a phosphoserine; by NEK6 (serine 144). Position 146 is a phosphoserine; by NEK7 (serine 146). At serine 171 the chain carries Phosphoserine. Positions 176–193 (SPAEKSHNSWENSDDSRN) are enriched in basic and acidic residues. Position 200 is a phosphoserine (serine 200). The residue at position 201 (threonine 201) is a Phosphothreonine. Residue tyrosine 226 is modified to Phosphotyrosine. At threonine 237 the chain carries Phosphothreonine. WD repeat units follow at residues 259 to 297 (LKLE…LFNY), 301 to 348 (TQRH…VWDS), 356 to 396 (IIGL…VWDW), 403 to 438 (AEIK…FWTW), and 445 to 484 (RKQG…IWSK). A Phosphothreonine; by NEK6 modification is found at threonine 490. 8 WD repeats span residues 500–538 (QISK…LWDH), 543–579 (EREI…LRGT), 582–621 (DGFQ…LWNS), 625–662 (RLEW…VLDA), 668–704 (VSIH…LYVV), 711–750 (YSRY…YWDI), 760–818 (RSDC…LFQY), and 825–864 (APSH…QWKL). Threonine 609 carries the phosphothreonine; by NEK6 and NEK7 modification. Residues 881–893 (LTKAPVSSTESVI) are compositionally biased toward polar residues. The interval 881 to 981 (LTKAPVSSTE…EDQQDPSPSS (101 aa)) is disordered. Serine 891 and serine 895 each carry phosphoserine. Phosphothreonine occurs at positions 897 and 899. Residue serine 903 is modified to Phosphoserine. Over residues 916–931 (ISSSPTLLENSLEQTV) the composition is skewed to polar residues. Over residues 937–946 (HSEEESEEGS) the composition is skewed to acidic residues. Serine 978 is subject to Phosphoserine. Residue serine 981 is modified to Phosphoserine; by NEK6 and NEK7.

This sequence belongs to the WD repeat EMAP family. In terms of assembly, homotrimer; self-association is mediated by the N-terminal coiled coil. Interacts (via WD repeats) with NUDC. Interacts with alpha- and beta-tubulin during mitosis. Phosphorylated during mitosis. Phosphorylation at Ser-144 and Ser-146 promotes its dissociation from microtubules during mitosis which is required for efficient chromosome congression.

The protein localises to the cytoplasm. It is found in the cytoskeleton. Its subcellular location is the spindle. It localises to the microtubule organizing center. The protein resides in the midbody. Its function is as follows. Essential for the formation and stability of microtubules (MTs). Required for the organization of the mitotic spindle and for the proper attachment of kinetochores to MTs. Promotes the recruitment of NUDC to the mitotic spindle for mitotic progression. The protein is Echinoderm microtubule-associated protein-like 4 (EML4) of Homo sapiens (Human).